A 258-amino-acid chain; its full sequence is Ribosomal RNA small subunit methyltransferase A (258 aa).

S-adenosyl-L-methionine-binding residues include histidine 13, leucine 15, glycine 40, glutamate 61, aspartate 86, and asparagine 106.

It belongs to the class I-like SAM-binding methyltransferase superfamily. rRNA adenine N(6)-methyltransferase family. RsmA subfamily.

The protein localises to the cytoplasm. The catalysed reaction is adenosine(1518)/adenosine(1519) in 16S rRNA + 4 S-adenosyl-L-methionine = N(6)-dimethyladenosine(1518)/N(6)-dimethyladenosine(1519) in 16S rRNA + 4 S-adenosyl-L-homocysteine + 4 H(+). Its function is as follows. Specifically dimethylates two adjacent adenosines (A1518 and A1519) in the loop of a conserved hairpin near the 3'-end of 16S rRNA in the 30S particle. May play a critical role in biogenesis of 30S subunits. This Coxiella burnetii (strain RSA 331 / Henzerling II) protein is Ribosomal RNA small subunit methyltransferase A.